A 185-amino-acid polypeptide reads, in one-letter code: Ribosome-recycling factor (185 aa).

This sequence belongs to the RRF family.

The protein localises to the cytoplasm. Its function is as follows. Responsible for the release of ribosomes from messenger RNA at the termination of protein biosynthesis. May increase the efficiency of translation by recycling ribosomes from one round of translation to another. The protein is Ribosome-recycling factor of Glaesserella parasuis serovar 5 (strain SH0165) (Haemophilus parasuis).